The primary structure comprises 304 residues: Acetyl-coenzyme A carboxylase carboxyl transferase subunit beta (304 aa).

Residues 23 to 292 (VWTKCDSCGQ…PNPDAPREGV (270 aa)) form the CoA carboxyltransferase N-terminal domain. Zn(2+) is bound by residues cysteine 27, cysteine 30, cysteine 46, and cysteine 49. A C4-type zinc finger spans residues 27-49 (CDSCGQVLYRAELERNLEVCPKC). Positions 283–304 (PNPDAPREGVVVPPAPDQESEA) are disordered.

The protein belongs to the AccD/PCCB family. As to quaternary structure, acetyl-CoA carboxylase is a heterohexamer composed of biotin carboxyl carrier protein (AccB), biotin carboxylase (AccC) and two subunits each of ACCase subunit alpha (AccA) and ACCase subunit beta (AccD). The cofactor is Zn(2+).

It localises to the cytoplasm. The enzyme catalyses N(6)-carboxybiotinyl-L-lysyl-[protein] + acetyl-CoA = N(6)-biotinyl-L-lysyl-[protein] + malonyl-CoA. Its pathway is lipid metabolism; malonyl-CoA biosynthesis; malonyl-CoA from acetyl-CoA: step 1/1. Functionally, component of the acetyl coenzyme A carboxylase (ACC) complex. Biotin carboxylase (BC) catalyzes the carboxylation of biotin on its carrier protein (BCCP) and then the CO(2) group is transferred by the transcarboxylase to acetyl-CoA to form malonyl-CoA. In Salmonella agona (strain SL483), this protein is Acetyl-coenzyme A carboxylase carboxyl transferase subunit beta.